Consider the following 307-residue polypeptide: Nucleotide-binding protein AAur_2084 (307 aa).

The segment at 1-21 is disordered; the sequence is MDEATAKSGTEQDGLTPVKPP. 30-37 serves as a coordination point for ATP; the sequence is GMSGAGRS. Position 81 to 84 (81 to 84) interacts with GTP; that stretch reads DVRS.

The protein belongs to the RapZ-like family.

Displays ATPase and GTPase activities. The protein is Nucleotide-binding protein AAur_2084 of Paenarthrobacter aurescens (strain TC1).